Consider the following 316-residue polypeptide: tRNA-cytidine(32) 2-sulfurtransferase (316 aa).

The tract at residues 1 to 31 is disordered; it reads MGAVIDDSMPGPGADATGTGPSDARTERETR. A compositionally biased stretch (low complexity) spans 10–21; sequence PGPGADATGTGP. Positions 62-67 match the PP-loop motif motif; that stretch reads SGGKDS. Residues Cys-137, Cys-140, and Cys-228 each coordinate [4Fe-4S] cluster.

Belongs to the TtcA family. As to quaternary structure, homodimer. Mg(2+) is required as a cofactor. [4Fe-4S] cluster serves as cofactor.

It localises to the cytoplasm. The catalysed reaction is cytidine(32) in tRNA + S-sulfanyl-L-cysteinyl-[cysteine desulfurase] + AH2 + ATP = 2-thiocytidine(32) in tRNA + L-cysteinyl-[cysteine desulfurase] + A + AMP + diphosphate + H(+). It participates in tRNA modification. Catalyzes the ATP-dependent 2-thiolation of cytidine in position 32 of tRNA, to form 2-thiocytidine (s(2)C32). The sulfur atoms are provided by the cysteine/cysteine desulfurase (IscS) system. This chain is tRNA-cytidine(32) 2-sulfurtransferase, found in Verminephrobacter eiseniae (strain EF01-2).